The chain runs to 267 residues: Hydroxynaphthalene reductase-like protein Arp2 (267 aa).

NADP(+) is bound by residues isoleucine 25, asparagine 45, aspartate 71, and asparagine 98. Catalysis depends on proton donor residues serine 147 and serine 148. Positions 162, 166, 195, and 197 each coordinate NADP(+). Tyrosine 162 serves as the catalytic Proton acceptor. The active-site Lowers pKa of active site Tyr is the lysine 166.

The protein belongs to the short-chain dehydrogenases/reductases (SDR) family.

Its function is as follows. Hydroxynaphthalene reductase-like protein; part of the Pks2 gene cluster that mediates the formation of infectious structures (appressoria), enabling these fungi to kill insects faster. The product of the Pks2 gene cluster is different from the one of Pks1 and has still not been identified. This is Hydroxynaphthalene reductase-like protein Arp2 from Metarhizium acridum (strain CQMa 102).